A 314-amino-acid chain; its full sequence is Leucine-rich repeat-containing protein 59 (314 aa).

Residues 1–247 (MNKGKIENIK…VPKAKRSICS (247 aa)) are Cytoplasmic-facing. 5 LRR repeats span residues 14 to 35 (DGNE…ELAA), 38 to 60 (KATF…CSLT), 61 to 82 (HLIK…IGQL), 84 to 106 (NLQH…SQLK), and 107 to 126 (SLKW…AKAA). The stretch at 146–216 (MKVLQEEAEK…AVAAQEQQKK (71 aa)) forms a coiled coil. 2 disordered regions span residues 165-197 (REQE…KERK) and 212-237 (EQQK…APES). Positions 215–225 (KKKKEEKKKKA) are enriched in basic residues. A helical membrane pass occupies residues 248–268 (LFFSLLLKLVLLLVIGVSSVV). Topologically, residues 269 to 314 (AVCQLTELRKEAFCIPLNVHFEETVRWAQGLDVVQQVIQKMSDLRT) are lumenal.

In terms of assembly, interacts with SGO1.

It is found in the microsome membrane. The protein localises to the endoplasmic reticulum membrane. Its subcellular location is the nucleus envelope. Required for nuclear import of FGF1. The sequence is that of Leucine-rich repeat-containing protein 59 (lrrc59) from Danio rerio (Zebrafish).